Consider the following 72-residue polypeptide: Conotoxin TxMMSK-04 (72 aa).

The first 20 residues, 1–20 (MMSKLGVLLTICLLLFPLTA), serve as a signal peptide directing secretion. A propeptide spanning residues 21-51 (VPLDGDQPADRPAERMQDGISSEHHPFFDSV) is cleaved from the precursor. Glutamine 55 carries the post-translational modification Pyrrolidone carboxylic acid. Intrachain disulfides connect cysteine 57–cysteine 71, cysteine 58–cysteine 67, and cysteine 63–cysteine 70. Position 69 is a 4-hydroxyproline (proline 69). Cysteine 71 is subject to Cysteine amide.

This sequence belongs to the conotoxin M superfamily. In terms of tissue distribution, expressed by the venom duct.

It is found in the secreted. The sequence is that of Conotoxin TxMMSK-04 from Conus textile (Cloth-of-gold cone).